Reading from the N-terminus, the 202-residue chain is Small ribosomal subunit protein uS4 (202 aa).

The S4 RNA-binding domain maps to 91-157; sequence CRLDNVVYRA…TPFIVARETH (67 aa).

It belongs to the universal ribosomal protein uS4 family. Part of the 30S ribosomal subunit. Contacts protein S5. The interaction surface between S4 and S5 is involved in control of translational fidelity.

In terms of biological role, one of the primary rRNA binding proteins, it binds directly to 16S rRNA where it nucleates assembly of the body of the 30S subunit. With S5 and S12 plays an important role in translational accuracy. The chain is Small ribosomal subunit protein uS4 from Nocardioides sp. (strain ATCC BAA-499 / JS614).